Reading from the N-terminus, the 113-residue chain is Large ribosomal subunit protein uL22 (113 aa).

It belongs to the universal ribosomal protein uL22 family. Part of the 50S ribosomal subunit.

This protein binds specifically to 23S rRNA; its binding is stimulated by other ribosomal proteins, e.g. L4, L17, and L20. It is important during the early stages of 50S assembly. It makes multiple contacts with different domains of the 23S rRNA in the assembled 50S subunit and ribosome. In terms of biological role, the globular domain of the protein is located near the polypeptide exit tunnel on the outside of the subunit, while an extended beta-hairpin is found that lines the wall of the exit tunnel in the center of the 70S ribosome. The protein is Large ribosomal subunit protein uL22 of Geobacillus stearothermophilus (Bacillus stearothermophilus).